The primary structure comprises 170 residues: Translocon-associated protein subunit gamma (170 aa).

The Lumenal segment spans residues 1 to 24; the sequence is MAEVDEFSAFRHENDVSIEQRIVY. Residues 25–45 traverse the membrane as a helical segment; the sequence is FINSLIVALVPVYLYHAIFFM. At 46–51 the chain is on the cytoplasmic side; the sequence is SIDDHM. Residues 52 to 72 traverse the membrane as a helical segment; the sequence is IIYGSVTLFAAIVLTFAYNNI. Residues 73-121 lie on the Lumenal side of the membrane; sequence YRMKRLKLSASREHISIASKNKVGDKKKFAAAQKEVQALVTSHEAIAAS. A helical membrane pass occupies residues 122–141; the sequence is IMYNNAVFLICVSIFSFIIF. Topologically, residues 142–145 are cytoplasmic; sequence KNVP. Residues 146–168 traverse the membrane as a helical segment; the sequence is LVYNYIISISLGAGLTSFLSTSS.

The protein belongs to the TRAP-gamma family. In terms of assembly, heterotrimer of TRAP-alpha, TRAP-beta and TRAP-gamma.

The protein localises to the endoplasmic reticulum membrane. TRAP proteins are part of a complex whose function is to bind calcium to the ER membrane and thereby regulate the retention of ER resident proteins. The polypeptide is Translocon-associated protein subunit gamma (ssr3) (Dictyostelium discoideum (Social amoeba)).